The following is a 422-amino-acid chain: Trichothecene biosynthesis transcription regulator TRI10 (422 aa).

It belongs to the TRI10 transcription regulator family.

The protein resides in the nucleus. Transcriptional activator of all of the trichothecene biosynthesis genes. Acts upstream of the cluster-encoded transcription factor TRI6 and is necessary for full expression of both the other trichothecene genes and the genes for the primary metabolic pathway that precedes the trichothecene biosynthetic pathway. This is Trichothecene biosynthesis transcription regulator TRI10 from Trichoderma arundinaceum.